The chain runs to 196 residues: Probable malonic semialdehyde reductase RutE (196 aa).

It belongs to the nitroreductase family. HadB/RutE subfamily. It depends on FMN as a cofactor.

The enzyme catalyses 3-hydroxypropanoate + NADP(+) = 3-oxopropanoate + NADPH + H(+). Its function is as follows. May reduce toxic product malonic semialdehyde to 3-hydroxypropionic acid, which is excreted. This is Probable malonic semialdehyde reductase RutE from Shigella flexneri serotype 5b (strain 8401).